We begin with the raw amino-acid sequence, 208 residues long: Uridine kinase (208 aa).

11–18 contributes to the ATP binding site; sequence GGTGSGKS.

The protein belongs to the uridine kinase family.

It is found in the cytoplasm. It carries out the reaction uridine + ATP = UMP + ADP + H(+). It catalyses the reaction cytidine + ATP = CMP + ADP + H(+). It functions in the pathway pyrimidine metabolism; CTP biosynthesis via salvage pathway; CTP from cytidine: step 1/3. The protein operates within pyrimidine metabolism; UMP biosynthesis via salvage pathway; UMP from uridine: step 1/1. This Clostridium perfringens (strain ATCC 13124 / DSM 756 / JCM 1290 / NCIMB 6125 / NCTC 8237 / Type A) protein is Uridine kinase.